An 82-amino-acid polypeptide reads, in one-letter code: Sigma-G-dependent sporulation-specific SASP protein (82 aa).

The protein is Sigma-G-dependent sporulation-specific SASP protein of Bacillus subtilis (strain 168).